A 758-amino-acid chain; its full sequence is 5-methyltetrahydropteroyltriglutamate--homocysteine methyltransferase (758 aa).

Residues 16 to 19 and Lys112 contribute to the 5-methyltetrahydropteroyltri-L-glutamate site; that span reads RELK. L-homocysteine-binding positions include 433-435 and Glu486; that span reads IGS. L-methionine-binding positions include 433–435 and Glu486; that span reads IGS. 5-methyltetrahydropteroyltri-L-glutamate-binding positions include 517-518 and Trp563; that span reads RC. Asp601 is a binding site for L-homocysteine. Asp601 provides a ligand contact to L-methionine. Residue Glu607 participates in 5-methyltetrahydropteroyltri-L-glutamate binding. Zn(2+) contacts are provided by His643, Cys645, and Glu667. His696 serves as the catalytic Proton donor. Zn(2+) is bound at residue Cys728.

It belongs to the vitamin-B12 independent methionine synthase family. It depends on Zn(2+) as a cofactor.

It carries out the reaction 5-methyltetrahydropteroyltri-L-glutamate + L-homocysteine = tetrahydropteroyltri-L-glutamate + L-methionine. It participates in amino-acid biosynthesis; L-methionine biosynthesis via de novo pathway; L-methionine from L-homocysteine (MetE route): step 1/1. In terms of biological role, catalyzes the transfer of a methyl group from 5-methyltetrahydrofolate to homocysteine resulting in methionine formation. The protein is 5-methyltetrahydropteroyltriglutamate--homocysteine methyltransferase of Neisseria meningitidis serogroup B (strain ATCC BAA-335 / MC58).